Consider the following 306-residue polypeptide: Aspartate carbamoyltransferase catalytic subunit (306 aa).

Arg-51 and Thr-52 together coordinate carbamoyl phosphate. Lys-79 lines the L-aspartate pocket. Arg-101, His-130, and Gln-133 together coordinate carbamoyl phosphate. Arg-163 and Arg-215 together coordinate L-aspartate. Positions 256 and 257 each coordinate carbamoyl phosphate.

This sequence belongs to the aspartate/ornithine carbamoyltransferase superfamily. ATCase family. Heterododecamer (2C3:3R2) of six catalytic PyrB chains organized as two trimers (C3), and six regulatory PyrI chains organized as three dimers (R2).

It carries out the reaction carbamoyl phosphate + L-aspartate = N-carbamoyl-L-aspartate + phosphate + H(+). It participates in pyrimidine metabolism; UMP biosynthesis via de novo pathway; (S)-dihydroorotate from bicarbonate: step 2/3. In terms of biological role, catalyzes the condensation of carbamoyl phosphate and aspartate to form carbamoyl aspartate and inorganic phosphate, the committed step in the de novo pyrimidine nucleotide biosynthesis pathway. The chain is Aspartate carbamoyltransferase catalytic subunit from Ehrlichia ruminantium (strain Welgevonden).